Consider the following 1249-residue polypeptide: Apoptotic protease-activating factor 1 (1249 aa).

The 90-residue stretch at 1–90 (MDAKARNCLL…KDLAGLLHSG (90 aa)) folds into the CARD domain. In terms of domain architecture, NB-ARC spans 106-415 (NTSFVRTVLC…LETEEVEDIL (310 aa)). Residues 154 to 161 (GMAGCGKS) and R265 contribute to the ATP site. A WD 1-1 repeat occupies 613–652 (PHTDAVYHACFSQDGQRIASCGADKTLQVFKAETGEKLLD). One copy of the WD 1-2 repeat lies at 655–694 (AHEDEVLCCAFSSDDSYIATCSVDKKVKIWDSGTGKLVHT). One copy of the WD 1-3 repeat lies at 697-738 (EHSEQVNCCHFTNKSNHLLLATGSNDSFLKLWDLNQKECRNT). One copy of the WD 1-4 repeat lies at 741–780 (GHTNSVTHCRFSPDDELLASCSADGTLKLWDVRSANEKKS). A WD 1-5 repeat occupies 796 to 837 (DVEVIVKCCSWSADGDRIIVAAKNKVLLLDIHTSGLLTEIHT). The stretch at 838 to 877 (GHHSTIQYCDFSPYDHLAVIALSQYCVELWNIDSRVKVAD) is one WD 1-6 repeat. The WD 1-7 repeat unit spans residues 880-910 (GHLSWVHGVMFSPDGSSFLTASDDQTIRVWE). An interpropeller linker region spans residues 910 to 921 (ETRKVCKNSAIV). The stretch at 922–958 (LKQEIDVVFQENEMMVLAVDNIRGLQLIAGKTGQIDY) is one WD 2-1 repeat. A WD 2-2 repeat occupies 959–998 (LPEAQVSCCCLSPHLEYVAFGDEEGAIKIIELPNNRVFSS). The stretch at 1001 to 1040 (GHKKAVRHIQFTADGKTLISSSEDSVIQVWNWQTEEYVFL) is one WD 2-3 repeat. One copy of the WD 2-4 repeat lies at 1042 to 1080 (AHQETVKDFRLLRDSRLLSWSFDGTVKVWNVITGRIERD). A WD 2-5 repeat occupies 1083-1122 (CHQGTVLSCAISSDATKFSSTSADKTAKIWSFELPSPLHE). The stretch at 1125-1164 (GHNSCVRCSAFSLDGILLATGDDNGEIRIWNVSDGQLLHL) is one WD 2-6 repeat. A WD 2-7 repeat occupies 1176-1213 (THGGWVTDVCFSPDRKMLVSAGGYLKWWNVVTGESSQT). The WD 2-8 repeat unit spans residues 1214-1249 (FYTNGTNLKKIHVSPDFRTYVTVDNLGILYILQVLE).

Monomer. Oligomerizes to a heptameric ring, known as the apoptosome, upon binding of cytochrome c and dATP. Oligomeric Apaf-1 and pro-caspase-9 bind to each other via their respective NH2-terminal CARD domains. Interacts with UACA. Interacts with APIP. Interacts (via CARD and NACHT domains) with NAIP/BIRC1 (via NACHT domain). Interacts with CIAO2A.

It is found in the cytoplasm. In terms of biological role, regulates programmed cell death; necessary for normal brain development. Participates with pro-caspase-9 (Apaf-3) in the cytochrome c-dependent activation of caspase-3, leading to apoptosis. This activation requires ATP. In Rattus norvegicus (Rat), this protein is Apoptotic protease-activating factor 1 (Apaf1).